A 203-amino-acid polypeptide reads, in one-letter code: MFIVVEGGEGAGKTQFIQALSKRLIEEGREIVTTREPGGCSLGDSVRGLLLDPEQKISPYAELLLFLAARAQHIQEKIIPALKSGKTVISDRFHDSTIVYQGIAGGLGESFVTNLCYHVVGDKPFLPDIIFLLDIPAREGLLRKARQKHLDKFEQKPQIFHQSVREGFLALAEKAPDRYKVLDALLPTEASVDQALLQIRALI.

7 to 14 (GGEGAGKT) lines the ATP pocket.

This sequence belongs to the thymidylate kinase family.

The enzyme catalyses dTMP + ATP = dTDP + ADP. Functionally, phosphorylation of dTMP to form dTDP in both de novo and salvage pathways of dTTP synthesis. The protein is Thymidylate kinase of Chlamydia trachomatis serovar L2 (strain ATCC VR-902B / DSM 19102 / 434/Bu).